Here is a 590-residue protein sequence, read N- to C-terminus: L-fucose isomerase (590 aa).

Residues Glu337 and Asp361 each act as proton acceptor in the active site. Glu337, Asp361, and His528 together coordinate Mn(2+).

This sequence belongs to the L-fucose isomerase family. Mn(2+) serves as cofactor.

It localises to the cytoplasm. It carries out the reaction L-fucose = L-fuculose. It participates in carbohydrate degradation; L-fucose degradation; L-lactaldehyde and glycerone phosphate from L-fucose: step 1/3. Converts the aldose L-fucose into the corresponding ketose L-fuculose. This Bacteroides fragilis (strain YCH46) protein is L-fucose isomerase.